A 251-amino-acid chain; its full sequence is MRIKGFFITLVAIIFQASLSSYNNNKNVFPFLDGIPISTSGHYEYQNILLWFVPIVSLSFCFSGSIRDTYISYEQLKLVREHSRVKWVTSQFLIITVVLLIFTLSQIAIFYIYSLVSLHNLDINSVINKRFVMMTLMYYLTLLNLFSFQLFMELYYKSQIAQLNISVYIIFSLILAKKLVQLNSPKVIHYFLIPNYSNGLRTGLSYYSQSGTAIIEPLLGLFIIIILQISIVILSVLKFKKIDMLKSEGLQ.

This is an uncharacterized protein from Bacillus subtilis (strain 168).